A 129-amino-acid polypeptide reads, in one-letter code: Large ribosomal subunit protein bL17 (129 aa).

This sequence belongs to the bacterial ribosomal protein bL17 family. Part of the 50S ribosomal subunit. Contacts protein L32.

In Buchnera aphidicola subsp. Baizongia pistaciae (strain Bp), this protein is Large ribosomal subunit protein bL17.